Consider the following 153-residue polypeptide: 3-hydroxyacyl-[acyl-carrier-protein] dehydratase FabZ (153 aa).

Residue H54 is part of the active site.

Belongs to the thioester dehydratase family. FabZ subfamily.

The protein localises to the cytoplasm. It carries out the reaction a (3R)-hydroxyacyl-[ACP] = a (2E)-enoyl-[ACP] + H2O. Involved in unsaturated fatty acids biosynthesis. Catalyzes the dehydration of short chain beta-hydroxyacyl-ACPs and long chain saturated and unsaturated beta-hydroxyacyl-ACPs. In Shewanella loihica (strain ATCC BAA-1088 / PV-4), this protein is 3-hydroxyacyl-[acyl-carrier-protein] dehydratase FabZ.